A 258-amino-acid chain; its full sequence is Protein UL24 homolog (258 aa).

The protein belongs to the herpesviridae UL24 family.

It localises to the virion. It is found in the host cytoplasm. Its subcellular location is the host nucleus. The protein resides in the host nucleolus. The protein localises to the host Golgi apparatus. Functionally, may participate in nuclear egress of viral particles. Plays a role in the dispersal of several host nucleolar proteins including NCL/nucleolin and NPM1. Since deletion of host NCL/nucleolin negatively impact on nuclear egress, UL24 supposedly acts on this process through its effect on host nucleoli. This Homo sapiens (Human) protein is Protein UL24 homolog.